A 182-amino-acid polypeptide reads, in one-letter code: Ribosome maturation factor RimM (182 aa).

The PRC barrel domain occupies 103 to 182 (EDDYYWKDLM…RVEVDWDPGF (80 aa)).

This sequence belongs to the RimM family. Binds ribosomal protein uS19.

It is found in the cytoplasm. An accessory protein needed during the final step in the assembly of 30S ribosomal subunit, possibly for assembly of the head region. Essential for efficient processing of 16S rRNA. May be needed both before and after RbfA during the maturation of 16S rRNA. It has affinity for free ribosomal 30S subunits but not for 70S ribosomes. In Yersinia enterocolitica serotype O:8 / biotype 1B (strain NCTC 13174 / 8081), this protein is Ribosome maturation factor RimM.